Reading from the N-terminus, the 368-residue chain is Chaperone protein DnaJ (368 aa).

The 66-residue stretch at D5–G70 folds into the J domain. The CR-type zinc-finger motif lies at G124–H201. 8 residues coordinate Zn(2+): C137, C140, C153, C156, C175, C178, C189, and C192. 4 CXXCXGXG motif repeats span residues C137–G144, C153–G160, C175–G182, and C189–G196.

The protein belongs to the DnaJ family. Homodimer. The cofactor is Zn(2+).

It localises to the cytoplasm. Its function is as follows. Participates actively in the response to hyperosmotic and heat shock by preventing the aggregation of stress-denatured proteins and by disaggregating proteins, also in an autonomous, DnaK-independent fashion. Unfolded proteins bind initially to DnaJ; upon interaction with the DnaJ-bound protein, DnaK hydrolyzes its bound ATP, resulting in the formation of a stable complex. GrpE releases ADP from DnaK; ATP binding to DnaK triggers the release of the substrate protein, thus completing the reaction cycle. Several rounds of ATP-dependent interactions between DnaJ, DnaK and GrpE are required for fully efficient folding. Also involved, together with DnaK and GrpE, in the DNA replication of plasmids through activation of initiation proteins. This is Chaperone protein DnaJ from Xylella fastidiosa (strain M12).